The primary structure comprises 126 residues: Small ribosomal subunit protein uS13 (126 aa).

Residues 98–126 (VRGQSTKNNARTRKGKRKTVANKKKAAKK) are disordered. The span at 107 to 126 (ARTRKGKRKTVANKKKAAKK) shows a compositional bias: basic residues.

It belongs to the universal ribosomal protein uS13 family. As to quaternary structure, part of the 30S ribosomal subunit. Forms a loose heterodimer with protein S19. Forms two bridges to the 50S subunit in the 70S ribosome.

Located at the top of the head of the 30S subunit, it contacts several helices of the 16S rRNA. In the 70S ribosome it contacts the 23S rRNA (bridge B1a) and protein L5 of the 50S subunit (bridge B1b), connecting the 2 subunits; these bridges are implicated in subunit movement. Contacts the tRNAs in the A and P-sites. This chain is Small ribosomal subunit protein uS13, found in Amoebophilus asiaticus (strain 5a2).